The chain runs to 35 residues: Photosystem II reaction center protein M (35 aa).

A helical membrane pass occupies residues 7–27 (GFIATILFVLVPTVFLLILYI).

It belongs to the PsbM family. In terms of assembly, PSII is composed of 1 copy each of membrane proteins PsbA, PsbB, PsbC, PsbD, PsbE, PsbF, PsbH, PsbI, PsbJ, PsbK, PsbL, PsbM, PsbT, PsbX, PsbY, PsbZ, Psb30/Ycf12, peripheral proteins PsbO, CyanoQ (PsbQ), PsbU, PsbV and a large number of cofactors. It forms dimeric complexes.

The protein localises to the cellular thylakoid membrane. Its function is as follows. One of the components of the core complex of photosystem II (PSII). PSII is a light-driven water:plastoquinone oxidoreductase that uses light energy to abstract electrons from H(2)O, generating O(2) and a proton gradient subsequently used for ATP formation. It consists of a core antenna complex that captures photons, and an electron transfer chain that converts photonic excitation into a charge separation. This subunit is found at the monomer-monomer interface. The chain is Photosystem II reaction center protein M from Crocosphaera subtropica (strain ATCC 51142 / BH68) (Cyanothece sp. (strain ATCC 51142)).